A 479-amino-acid chain; its full sequence is Adenylate kinase 8 (479 aa).

2 adenylate kinase regions span residues 58 to 258 and 269 to 471; these read PRVV…TYVQ and PKVL…SGII. 67–72 lines the ATP pocket; that stretch reads ASGKTT. Residues 87–113 are NMP 1; the sequence is TKENLLEREFSLLSLEAKKHYQVYKRV. AMP-binding positions include 140–143, glutamine 147, and arginine 203; that span reads GIPE. The tract at residues 177–206 is LID 1; the sequence is GKRIDPVTGEIYHTTFDWPPELEIQNRLIQ. ATP is bound at residue 278–283; it reads GCGKKL. The segment at 298–327 is NMP 2; that stretch reads SCGQLLKEAMAAESSLGDLIEPFFEKRMTV. Residues 325–327, 354–357, and glutamine 361 contribute to the AMP site; these read MTV and GFPR. The interval 391-424 is LID 2; it reads LRRTDPVTGERFHLMYKPPPTIEVQARLLQNPKD. Arginine 392 contributes to the ATP binding site.

It belongs to the adenylate kinase family. In terms of assembly, interacts with CFAP45 and CFAP52; CFAP45 and AK8 dimerization may create a cavity at the interface of the dimer that can accommodate AMP.

It localises to the cytoplasm. The protein localises to the cytosol. Its subcellular location is the cytoskeleton. It is found in the cilium axoneme. The catalysed reaction is AMP + ATP = 2 ADP. It carries out the reaction a 2'-deoxyribonucleoside 5'-diphosphate + ATP = a 2'-deoxyribonucleoside 5'-triphosphate + ADP. The enzyme catalyses a ribonucleoside 5'-diphosphate + ATP = a ribonucleoside 5'-triphosphate + ADP. In terms of biological role, nucleoside monophosphate (NMP) kinase that catalyzes the reversible transfer of the terminal phosphate group between nucleoside triphosphates and monophosphates. Has highest activity toward AMP, and weaker activity toward dAMP, CMP and dCMP. Also displays broad nucleoside diphosphate kinase activity. The polypeptide is Adenylate kinase 8 (Ak8) (Rattus norvegicus (Rat)).